A 103-amino-acid polypeptide reads, in one-letter code: Small ribosomal subunit protein uS10 (103 aa).

It belongs to the universal ribosomal protein uS10 family. Part of the 30S ribosomal subunit.

In terms of biological role, involved in the binding of tRNA to the ribosomes. The sequence is that of Small ribosomal subunit protein uS10 from Shewanella pealeana (strain ATCC 700345 / ANG-SQ1).